The following is a 152-amino-acid chain: Superoxide dismutase [Cu-Zn] 2 (152 aa).

Cu cation is bound by residues His45, His47, and His62. The cysteines at positions 56 and 145 are disulfide-linked. The Zn(2+) site is built by His62, His70, His79, and Asp82. Cu cation is bound at residue His119.

This sequence belongs to the Cu-Zn superoxide dismutase family. In terms of assembly, homodimer. Cu cation is required as a cofactor. Requires Zn(2+) as cofactor.

Its subcellular location is the cytoplasm. It carries out the reaction 2 superoxide + 2 H(+) = H2O2 + O2. Functionally, destroys radicals which are normally produced within the cells and which are toxic to biological systems. In Solanum lycopersicum (Tomato), this protein is Superoxide dismutase [Cu-Zn] 2 (SODCC.5).